Consider the following 90-residue polypeptide: Putative membrane protein insertion efficiency factor (90 aa).

It belongs to the UPF0161 family.

It localises to the cell inner membrane. Its function is as follows. Could be involved in insertion of integral membrane proteins into the membrane. The polypeptide is Putative membrane protein insertion efficiency factor (Thermosynechococcus vestitus (strain NIES-2133 / IAM M-273 / BP-1)).